A 391-amino-acid polypeptide reads, in one-letter code: Phosphoprotein (391 aa).

Phosphothreonine occurs at positions 10, 16, and 39. The span at 55–65 (KNIQYPTTSHQ) shows a compositional bias: polar residues. The interval 55 to 90 (KNIQYPTTSHQGSKSKGRGSGARPIIVSSSEGGTGG) is disordered. Ser69 is modified (phosphoserine). Phosphothreonine occurs at positions 91, 150, and 165. The interval 145 to 208 (TSTPVTEFKR…PQQDSTPANV (64 aa)) is disordered. Ser188 carries the post-translational modification Phosphoserine. The interval 216 to 279 (ISANEIMDLL…MATVKIMDPG (64 aa)) is multimerization. Positions 218-245 (ANEIMDLLRGMDARLQHLEQKVDKVLAQ) form a coiled coil. Thr250 carries the phosphothreonine modification. Ser257 carries the phosphoserine modification. Phosphothreonine is present on residues Thr258 and Thr282. A phosphoserine mark is found at Ser292 and Ser294. Residue Thr298 is modified to Phosphothreonine. Residues Ser301 and Ser374 each carry the phosphoserine modification. The tract at residues 343–391 (AGRKVMITKMITDCVANPQMKQVFEQRLAKASTEDALNDIKRDIIRSAI) is interaction with the nucleoprotein. Thr375 bears the Phosphothreonine mark.

It belongs to the rubulavirus/avulavirus P protein family. As to quaternary structure, homotetramer. Interacts (via multimerization domain) with polymerase L; this interaction forms the polymerase L-P complex. Interacts (via N-terminus) with N0 (via Ncore); this interaction allows P to chaperon N0 to avoid N polymerization before encapsidation. Interacts (via C-terminus) with N-RNA template; this interaction positions the polymerase on the template for both transcription and replication. Interacts with host RPS6KB1 kinase; this interaction may play a role in the viral replication and transcription.

Functionally, essential cofactor of the RNA polymerase L that plays a central role in the transcription and replication by forming the polymerase complex with RNA polymerase L and recruiting L to the genomic N-RNA template for RNA synthesis. Also plays a central role in the encapsidation of nascent RNA chains by forming the encapsidation complex with the nucleocapsid protein N (N-P complex). Acts as a chaperone for newly synthesized free N protein, so-called N0, allowing encapsidation of nascent RNA chains during replication. The nucleoprotein protein N prevents excessive phosphorylation of P, which leads to down-regulation of viral transcription/ replication. Participates, together with N, in the formation of viral factories (viroplasms), which are large inclusions in the host cytoplasm where replication takes place. The protein is Phosphoprotein of Mumps virus genotype B (strain Miyahara vaccine) (MuV).